The chain runs to 1038 residues: Isoleucine--tRNA ligase (1038 aa).

The 'HIGH' region signature appears at 48–58 (PTANGKPHVGH). A 'KMSKS' region motif is present at residues 590–594 (KMSKS). Position 593 (Lys-593) interacts with ATP.

Belongs to the class-I aminoacyl-tRNA synthetase family. IleS type 2 subfamily. Monomer. Zn(2+) serves as cofactor.

It is found in the cytoplasm. It carries out the reaction tRNA(Ile) + L-isoleucine + ATP = L-isoleucyl-tRNA(Ile) + AMP + diphosphate. In terms of biological role, catalyzes the attachment of isoleucine to tRNA(Ile). As IleRS can inadvertently accommodate and process structurally similar amino acids such as valine, to avoid such errors it has two additional distinct tRNA(Ile)-dependent editing activities. One activity is designated as 'pretransfer' editing and involves the hydrolysis of activated Val-AMP. The other activity is designated 'posttransfer' editing and involves deacylation of mischarged Val-tRNA(Ile). In Clostridium novyi (strain NT), this protein is Isoleucine--tRNA ligase.